The primary structure comprises 238 residues: MQLPNLQSATLLRRYKRFLADVELNNGEILTLHCANTGAMTGCGEKGDTVWFSTSDSKTRKYPHSWELTQLKNGQTVCINTHRSNQLTLEALQNKIITELAEYDEILPEVKYGVENSRIDFLLKGKNLPDCYVEVKSVTFVKNHLGLFPDAVTTRGQKHLRELIAMKKRGHRAVVFFAGLHDGFNRFTVAKSIDPDYAELLQQAVKEGVEVYSYAVKFDFSHQKPTALYLTNLVSYLE.

This sequence belongs to the SfsA family.

The sequence is that of Sugar fermentation stimulation protein homolog from Histophilus somni (strain 2336) (Haemophilus somnus).